Reading from the N-terminus, the 219-residue chain is PKHD-type hydroxylase Plav_0037 (219 aa).

The Fe2OG dioxygenase domain occupies 78-172; it reads NFIRILLSRY…RRAAVGWIRS (95 aa). 3 residues coordinate Fe cation: H96, D98, and H153. 2-oxoglutarate is bound at residue R163.

It depends on Fe(2+) as a cofactor. The cofactor is L-ascorbate.

This is PKHD-type hydroxylase Plav_0037 from Parvibaculum lavamentivorans (strain DS-1 / DSM 13023 / NCIMB 13966).